Here is a 93-residue protein sequence, read N- to C-terminus: UPF0058 protein AF_0738 (93 aa).

Belongs to the UPF0058 family.

The protein is UPF0058 protein AF_0738 of Archaeoglobus fulgidus (strain ATCC 49558 / DSM 4304 / JCM 9628 / NBRC 100126 / VC-16).